We begin with the raw amino-acid sequence, 126 residues long: Large-conductance mechanosensitive channel (126 aa).

2 consecutive transmembrane segments (helical) span residues 14–34 and 66–86; these read VIDLAVGVVIGTAFSAVVNSL and FITTIVNFLIISAALYFLVVV.

It belongs to the MscL family. As to quaternary structure, homopentamer.

The protein localises to the cell membrane. Channel that opens in response to stretch forces in the membrane lipid bilayer. May participate in the regulation of osmotic pressure changes within the cell. The protein is Large-conductance mechanosensitive channel of Roseiflexus sp. (strain RS-1).